The chain runs to 159 residues: SsrA-binding protein (159 aa).

The protein belongs to the SmpB family.

It localises to the cytoplasm. Required for rescue of stalled ribosomes mediated by trans-translation. Binds to transfer-messenger RNA (tmRNA), required for stable association of tmRNA with ribosomes. tmRNA and SmpB together mimic tRNA shape, replacing the anticodon stem-loop with SmpB. tmRNA is encoded by the ssrA gene; the 2 termini fold to resemble tRNA(Ala) and it encodes a 'tag peptide', a short internal open reading frame. During trans-translation Ala-aminoacylated tmRNA acts like a tRNA, entering the A-site of stalled ribosomes, displacing the stalled mRNA. The ribosome then switches to translate the ORF on the tmRNA; the nascent peptide is terminated with the 'tag peptide' encoded by the tmRNA and targeted for degradation. The ribosome is freed to recommence translation, which seems to be the essential function of trans-translation. This is SsrA-binding protein from Frankia casuarinae (strain DSM 45818 / CECT 9043 / HFP020203 / CcI3).